We begin with the raw amino-acid sequence, 203 residues long: Adenylyl-sulfate kinase (203 aa).

35 to 42 (GLSGSGKS) is an ATP binding site. Residue Ser109 is the Phosphoserine intermediate of the active site.

Belongs to the APS kinase family.

It catalyses the reaction adenosine 5'-phosphosulfate + ATP = 3'-phosphoadenylyl sulfate + ADP + H(+). Its pathway is sulfur metabolism; hydrogen sulfide biosynthesis; sulfite from sulfate: step 2/3. Catalyzes the synthesis of activated sulfate. This chain is Adenylyl-sulfate kinase, found in Geotalea daltonii (strain DSM 22248 / JCM 15807 / FRC-32) (Geobacter daltonii).